A 441-amino-acid polypeptide reads, in one-letter code: pH-response regulator protein palC (441 aa).

Positions 3-352 (ISYTGQLPTT…GAAYAAILQL (350 aa)) constitute a BRO1 domain. Disordered regions lie at residues 278 to 304 (RKDD…TSSG) and 414 to 441 (KWTP…GSYY).

Belongs to the palC family.

In terms of biological role, required for the proteolytic cleavage of the transcription factor RIM101 in response to alkaline ambient pH. The sequence is that of pH-response regulator protein palC from Yarrowia lipolytica (strain CLIB 122 / E 150) (Yeast).